We begin with the raw amino-acid sequence, 515 residues long: ATP synthase subunit alpha (515 aa).

171–178 (GDRQTGKT) provides a ligand contact to ATP.

The protein belongs to the ATPase alpha/beta chains family. In terms of assembly, F-type ATPases have 2 components, CF(1) - the catalytic core - and CF(0) - the membrane proton channel. CF(1) has five subunits: alpha(3), beta(3), gamma(1), delta(1), epsilon(1). CF(0) has three main subunits: a(1), b(2) and c(9-12). The alpha and beta chains form an alternating ring which encloses part of the gamma chain. CF(1) is attached to CF(0) by a central stalk formed by the gamma and epsilon chains, while a peripheral stalk is formed by the delta and b chains.

The protein resides in the cell inner membrane. The enzyme catalyses ATP + H2O + 4 H(+)(in) = ADP + phosphate + 5 H(+)(out). Functionally, produces ATP from ADP in the presence of a proton gradient across the membrane. The alpha chain is a regulatory subunit. The chain is ATP synthase subunit alpha from Xylella fastidiosa (strain Temecula1 / ATCC 700964).